A 225-amino-acid polypeptide reads, in one-letter code: Ribosome maturation factor RimM (225 aa).

Positions 144 to 225 constitute a PRC barrel domain; that stretch reads ADEFYWVDLI…RIVVDWEADY (82 aa).

This sequence belongs to the RimM family. In terms of assembly, binds ribosomal protein uS19.

It localises to the cytoplasm. An accessory protein needed during the final step in the assembly of 30S ribosomal subunit, possibly for assembly of the head region. Essential for efficient processing of 16S rRNA. May be needed both before and after RbfA during the maturation of 16S rRNA. It has affinity for free ribosomal 30S subunits but not for 70S ribosomes. The sequence is that of Ribosome maturation factor RimM from Burkholderia orbicola (strain AU 1054).